Consider the following 66-residue polypeptide: DNA-directed RNA polymerase subunit Rpo10 (66 aa).

Positions 7, 10, 47, and 48 each coordinate Zn(2+).

Belongs to the archaeal Rpo10/eukaryotic RPB10 RNA polymerase subunit family. In terms of assembly, part of the RNA polymerase complex. It depends on Zn(2+) as a cofactor.

The protein resides in the cytoplasm. The enzyme catalyses RNA(n) + a ribonucleoside 5'-triphosphate = RNA(n+1) + diphosphate. In terms of biological role, DNA-dependent RNA polymerase (RNAP) catalyzes the transcription of DNA into RNA using the four ribonucleoside triphosphates as substrates. The polypeptide is DNA-directed RNA polymerase subunit Rpo10 (Halobacterium salinarum (strain ATCC 29341 / DSM 671 / R1)).